The following is a 741-amino-acid chain: 2-5A-dependent ribonuclease (741 aa).

The interval 1–21 (MESRDHNNPQEGPTSSSGRRA) is disordered. Polar residues predominate over residues 9-18 (PQEGPTSSSG). ANK repeat units follow at residues 24 to 53 (EDNH…NVNF), 58 to 87 (GGWT…DPVL), 91 to 120 (NGAT…DVNE), 124 to 153 (YGFT…NVNL), 167 to 197 (GGAT…DVNA), 201 to 234 (MGRN…DVNV), 238 to 268 (RGKT…EIND), 272 to 301 (DGKT…STDC), and 303 to 329 (DLVM…KEDF). 2-5A binding (P-loop) regions lie at residues 229–242 (GADV…GKTP) and 253–275 (GLVQ…DGKT). Positions 365–586 (IDEKYKIADT…LSDLLGHPFF (222 aa)) constitute a Protein kinase domain. Residues 395–444 (CEGSPRAQREVSCLQSSRENSHLVTFYGSESHRGHLFVCVTLCEQTLEAC) form a C6-type; atypical zinc finger. A KEN domain is found at 589-723 (WESRYRTLRN…KHFPQTHSPN (135 aa)). K684 carries the post-translational modification N6-acetyllysine. Residues 715 to 741 (HFPQTHSPNKPQCDGAGGASGLASPGC) form a disordered region.

Belongs to the protein kinase superfamily. In terms of assembly, monomer (inactive form) or homodimer. Interacts with ABCE1; this interaction inhibits the RNASEL. It depends on Mn(2+) as a cofactor. Mg(2+) is required as a cofactor. In terms of tissue distribution, highly expressed in spleen and thymus followed by prostate, testis, uterus, small intestine, colon and peripheral blood leukocytes.

The protein resides in the cytoplasm. It localises to the mitochondrion. Its activity is regulated as follows. After binding to 2-5A (5'-phosphorylated 2',5'-linked oligoadenylates) the homodimerization and subsequent activation occurs. Inhibited by RNASEL inhibitor ABCE1/RLI, a cytoplasmic member of the ATP-binding cassette (ABC) transporter family. Functionally, endoribonuclease that functions in the interferon (IFN) antiviral response. In INF treated and virus infected cells, RNASEL probably mediates its antiviral effects through a combination of direct cleavage of single-stranded viral RNAs, inhibition of protein synthesis through the degradation of rRNA, induction of apoptosis, and induction of other antiviral genes. RNASEL mediated apoptosis is the result of a JNK-dependent stress-response pathway leading to cytochrome c release from mitochondria and caspase-dependent apoptosis. Therefore, activation of RNASEL could lead to elimination of virus infected cells under some circumstances. In the crosstalk between autophagy and apoptosis proposed to induce autophagy as an early stress response to small double-stranded RNA and at later stages of prolonged stress to activate caspase-dependent proteolytic cleavage of BECN1 to terminate autophagy and promote apoptosis. Might play a central role in the regulation of mRNA turnover. Cleaves 3' of UpNp dimers, with preference for UU and UA sequences, to sets of discrete products ranging from between 4 and 22 nucleotides in length. This is 2-5A-dependent ribonuclease (RNASEL) from Homo sapiens (Human).